The following is a 234-amino-acid chain: Uridylate kinase (234 aa).

9 to 12 lines the ATP pocket; the sequence is KLSG. G51 is a UMP binding site. G52 and R56 together coordinate ATP. Residues D71 and 132–139 each bind UMP; that span reads CGNPFFTT. Positions 159, 165, and 168 each coordinate ATP.

It belongs to the UMP kinase family. Homohexamer.

The protein localises to the cytoplasm. It catalyses the reaction UMP + ATP = UDP + ADP. It participates in pyrimidine metabolism; CTP biosynthesis via de novo pathway; UDP from UMP (UMPK route): step 1/1. Inhibited by UTP. Its function is as follows. Catalyzes the reversible phosphorylation of UMP to UDP. This Prochlorococcus marinus (strain MIT 9515) protein is Uridylate kinase.